Reading from the N-terminus, the 190-residue chain is NADH-quinone oxidoreductase subunit B (190 aa).

C69, C70, C134, and C164 together coordinate [4Fe-4S] cluster.

This sequence belongs to the complex I 20 kDa subunit family. As to quaternary structure, NDH-1 is composed of 14 different subunits. Subunits NuoB, C, D, E, F, and G constitute the peripheral sector of the complex. [4Fe-4S] cluster serves as cofactor.

The protein resides in the cell inner membrane. The catalysed reaction is a quinone + NADH + 5 H(+)(in) = a quinol + NAD(+) + 4 H(+)(out). Its function is as follows. NDH-1 shuttles electrons from NADH, via FMN and iron-sulfur (Fe-S) centers, to quinones in the respiratory chain. Couples the redox reaction to proton translocation (for every two electrons transferred, four hydrogen ions are translocated across the cytoplasmic membrane), and thus conserves the redox energy in a proton gradient. In Chelativorans sp. (strain BNC1), this protein is NADH-quinone oxidoreductase subunit B.